Reading from the N-terminus, the 229-residue chain is MYDISKWKHVFKLDPNKEISDEHLEMICESGTDAVIVGGSDGVTIDNVLHMLVSIRRYAVPCVLEVSNVEAITPGFDFYYIPSVLNSRKVEWLTGVHHEALKEFGDIMNWDEIFMEGYCVLNPEAKVAQLTEAKCDLTEDDVIAYARMADKLLHLPIFYLEYSGTYGDVELVKKVKAELQQAKLYYGGGISNVKEAKEVAQYADTVVVGNVIYENIKAALQTVKAVKGE.

Residue K12 coordinates sn-glycerol 1-phosphate. 2 residues coordinate Mg(2+): D14 and S40. Sn-glycerol 1-phosphate-binding positions include 159–164 (YLEYSG), G189, and 209–210 (GN).

It belongs to the GGGP/HepGP synthase family. Group I subfamily. As to quaternary structure, homodimer. Requires Mg(2+) as cofactor.

The catalysed reaction is sn-glycerol 1-phosphate + all-trans-heptaprenyl diphosphate = 3-heptaprenyl-sn-glycero-1-phosphate + diphosphate. The protein operates within membrane lipid metabolism; glycerophospholipid metabolism. In terms of biological role, prenyltransferase that catalyzes in vivo the transfer of the heptaprenyl moiety of heptaprenyl pyrophosphate (HepPP; 35 carbon atoms) to the C3 hydroxyl of sn-glycerol-1-phosphate (G1P), producing heptaprenylglyceryl phosphate (HepGP). This reaction is an ether-bond-formation step in the biosynthesis of archaea-type G1P-based membrane lipids found in Bacillales. In Bacillus cytotoxicus (strain DSM 22905 / CIP 110041 / 391-98 / NVH 391-98), this protein is Heptaprenylglyceryl phosphate synthase.